The primary structure comprises 256 residues: Low molecular mass lipoprotein PBMHP-6 (256 aa).

An N-terminal signal peptide occupies residues 1–19 (MRLTLFAFVLAVCALASNA).

Belongs to the 30 kDa lipoprotein family.

It localises to the secreted. This chain is Low molecular mass lipoprotein PBMHP-6, found in Bombyx mori (Silk moth).